A 573-amino-acid polypeptide reads, in one-letter code: Glutathione/L-cysteine transport system ATP-binding/permease protein CydC (573 aa).

The Cytoplasmic portion of the chain corresponds to 1-15 (MRALLPYLALYKRHK). 2 consecutive transmembrane segments (helical) span residues 16–36 (WMLS…IGLL) and 37–57 (TLSG…LYSF). The ABC transmembrane type-1 domain maps to 20–306 (LGIVLAIVTL…VTGAFQHLGQ (287 aa)). Residues 58–136 (NYMLPAAGVR…VDTLDHLYLR (79 aa)) lie on the Cytoplasmic side of the membrane. The chain crosses the membrane as a helical span at residues 137 to 157 (VISPLVGAFVVIMVVTIGLSF). At 158–161 (LDFT) the chain is on the periplasmic side. The chain crosses the membrane as a helical span at residues 162–182 (LAFTLGGIMLLTLFLMPPLFY). At 183 to 249 (RAGKSTGQNL…QSELTALSQA (67 aa)) the chain is on the cytoplasmic side. The chain crosses the membrane as a helical span at residues 250–270 (IMLLIGALAVILMLWMASGGV). The Periplasmic portion of the chain corresponds to 271 to 276 (GGNAQP). A helical membrane pass occupies residues 277–297 (GALIALFVFCALAAFEALAPV). Topologically, residues 298–573 (TGAFQHLGQV…GRYYQFKQGL (276 aa)) are cytoplasmic. One can recognise an ABC transporter domain in the interval 339–572 (LTLRDVQFTY…QGRYYQFKQG (234 aa)). 373 to 380 (GRTGCGKS) serves as a coordination point for ATP.

This sequence belongs to the ABC transporter superfamily. Cysteine exporter (TC 3.A.1.129.1) family. As to quaternary structure, forms a heterodimer with CydD.

The protein resides in the cell inner membrane. The catalysed reaction is L-cysteine(in) + ATP + H2O = L-cysteine(out) + ADP + phosphate + H(+). It carries out the reaction glutathione(in) + ATP + H2O = glutathione(out) + ADP + phosphate + H(+). Its activity is regulated as follows. ATPase activity is stimulated by various thiol compounds. The presence of heme leads to a further enhancement of thiol-stimulated ATPase activity, although a large excess of heme inhibits activity. Glutathione transport is inhibited by sodium orthovanadate, an inhibitor of ABC-type transport systems, but not by the proton ionophore carbonyl cyanide m-chlorophenylhydrazone (CCCP). Part of the ABC transporter complex CydDC that exports the reduced low-molecular-weight thiols cysteine and glutathione to the periplasm. Export of these thiol-containing redox-active molecules may be crucial for redox homeostasis in the periplasm, permitting correct assembly of various respiratory complexes and formation of correct disulfide bonds in periplasmic and secreted proteins. CydC contains transmembrane domains (TMD), which form a pore in the inner membrane, and an ATP-binding domain (NBD), which is responsible for energy generation. Required for the assembly of functional cytochrome bd-type quinol oxidases and periplasmic c-type cytochromes. Overexpression of CydDC under anaerobic conditions also results in the formation of a heme biosynthesis-derived pigment, P-574. CydDC binds heme b, but heme is probably not transported by the complex and instead has a role in regulating ATPase activity. Its function is as follows. Conversely, a more recent study suggests an alternative function of CydDC: authors suggest that CydDC does not mediate the export of L-cysteine but rather reduces cytoplasmic L-cystine to L-cysteine. The principle function of CydDC would be to maintain the reduced state of cytoplasmic L-cysteine, thereby providing an important connection between sulfur metabolism, oxidative stress and resistance to antibiotics. This is Glutathione/L-cysteine transport system ATP-binding/permease protein CydC from Escherichia coli (strain K12).